Consider the following 515-residue polypeptide: Maturase K (515 aa).

This sequence belongs to the intron maturase 2 family. MatK subfamily.

It is found in the plastid. Its subcellular location is the chloroplast. In terms of biological role, usually encoded in the trnK tRNA gene intron. Probably assists in splicing its own and other chloroplast group II introns. The chain is Maturase K from Pinus attenuata (Knobcone pine).